The chain runs to 1214 residues: [F-actin]-monooxygenase mical1 (1214 aa).

The monooxygenase domain stretch occupies residues 1–488 (MVNPLDSVNP…KRLYEAEEQE (488 aa)). FAD contacts are provided by residues Cys96, 115-117 (EKR), 122-124 (RNN), Phe182, Tyr292, and Asp392. The segment at 484–505 (AEEQESKPNKLKKPDIKAKPRK) is disordered. The 107-residue stretch at 508–614 (MKRLEELLSW…YLTQIRNALT (107 aa)) folds into the Calponin-homology (CH) domain. The disordered stretch occupies residues 649 to 676 (HKDRLASVKGPRQQNMKEKEEKKDVKEE). Residues 663 to 676 (NMKEKEEKKDVKEE) are compositionally biased toward basic and acidic residues. Residues 686 to 748 (EPCYFCKKHL…ELHSLAEEEE (63 aa)) form the LIM zinc-binding domain. Cys688, Cys691, His709, Cys712, Cys715, Cys718, Cys738, and His741 together coordinate Zn(2+). The segment at 747–1019 (EEGDEGHGGA…DDEDEDEEDL (273 aa)) is disordered. Residues 796–815 (PDFDESTEFPAPDQDEPPDL) show a composition bias toward acidic residues. The segment covering 828-841 (SAENTNMENQQHNI) has biased composition (polar residues). Over residues 910–922 (RGSSSAASTSSSS) the composition is skewed to low complexity. The segment covering 974 to 987 (SPWNLSSPRLQQRF) has biased composition (polar residues). A compositionally biased stretch (acidic residues) spans 1003–1019 (VSEDDNEDDEDEDEEDL). A bMERB domain is found at 1053 to 1199 (KMTEIQRFHK…EVNDQFNSSL (147 aa)). Residues 1061–1131 (HKAQSIQRRL…DLMVASRQLE (71 aa)) adopt a coiled-coil conformation. The interval 1194–1214 (QFNSSLDAKRRSTTASQVHWE) is disordered.

It belongs to the Mical family. Requires FAD as cofactor.

The protein resides in the cytoplasm. The protein localises to the cytoskeleton. It is found in the midbody. It localises to the endosome membrane. The enzyme catalyses L-methionyl-[F-actin] + NADPH + O2 + H(+) = L-methionyl-(R)-S-oxide-[F-actin] + NADP(+) + H2O. It catalyses the reaction NADPH + O2 + H(+) = H2O2 + NADP(+). In terms of biological role, monooxygenase that promotes depolymerization of F-actin by mediating oxidation of specific methionine residues on actin to form methionine-sulfoxide, resulting in actin filament disassembly and prevent repolymerization. May be involved in endosomal tubule extension and neosynthesized protein export. The protein is [F-actin]-monooxygenase mical1 (mical1) of Danio rerio (Zebrafish).